The following is a 1407-amino-acid chain: Metabotropic glutamate receptor-like protein P (1407 aa).

Residues 1–696 (MKFKKKNIYW…KTIKVTSFVK (696 aa)) are Extracellular-facing. Asn-43 and Asn-58 each carry an N-linked (GlcNAc...) asparagine glycan. PbH1 repeat units lie at residues 93–118 (ISDIHFKDLTIKNGFGNAISGIFDGG) and 129–150 (FVNVALIDNTCSASGGGIFLYN). Residues Asn-162, Asn-179, Asn-182, Asn-230, Asn-241, Asn-270, Asn-368, Asn-391, Asn-464, Asn-512, Asn-539, Asn-544, Asn-554, Asn-571, Asn-627, and Asn-646 are each glycosylated (N-linked (GlcNAc...) asparagine). One copy of the PbH1 3 repeat lies at 254–279 (ISNVIFESCEFIGNRANSTGGLSFLT). The PbH1 4 repeat unit spans residues 452 to 476 (GYSVYIENCEVKNNTGLFKGCFIDT). A helical membrane pass occupies residues 697–717 (FLVGTLAAILLIILIISGFIS). The Cytoplasmic portion of the chain corresponds to 718–731 (LKYRKKRVIRYSNP). The chain crosses the membrane as a helical span at residues 732–752 (LFLCIILVGCIIFLITIPVLF). At 753-758 (GSTSAT) the chain is on the extracellular side. A helical membrane pass occupies residues 759–779 (CKIRFPIIVIGSCLVTSSVFI). The Cytoplasmic segment spans residues 780–806 (KQFRIWRLIKDIQLLRETNVENKYLLK). Residues 807–827 (FISILMVIPIIIVICSFFIFP) form a helical membrane-spanning segment. Topologically, residues 828 to 853 (THEKYTFNQRDITITHYCSDGSYLAY) are extracellular. A helical membrane pass occupies residues 854-874 (VIIFLVYQMAILLFGCYLVIV). Residues 875–890 (CRKFRSIPGTFNEATY) are Cytoplasmic-facing. The chain crosses the membrane as a helical span at residues 891 to 911 (IGILIYNYTVVLIVAIPLAYV). Over 912–919 (FNKNPLAN) the chain is Extracellular. Residues 920–940 (FLIFSISIIVFVLSTIILLFI) traverse the membrane as a helical segment. Over 941-1407 (PKFHFLLRKK…LSPINLSKRK (467 aa)) the chain is Cytoplasmic. The span at 991–1004 (QQRQGNLYNNNSLG) shows a compositional bias: polar residues. Disordered regions lie at residues 991–1072 (QQRQ…DPNF), 1084–1248 (GKRK…SSIG), 1267–1351 (KKVK…NFNE), and 1369–1407 (FHQKKQKDSDNRKNYNISPINISDEKVPPLSPINLSKRK). Positions 1005-1029 (RSISSNTRKRSNNNINNNNNNNSFN) are enriched in low complexity. The segment covering 1030–1040 (MTGFSDSSSTI) has biased composition (polar residues). A compositionally biased stretch (low complexity) spans 1041–1071 (SNPNLTSFTSSPSSLNSSSDSDSTPDFNDPN). Basic and acidic residues predominate over residues 1084-1093 (GKRKSIEKNK). 3 stretches are compositionally biased toward low complexity: residues 1099 to 1147 (PNSP…NTPI), 1154 to 1246 (SSKT…SDSS), and 1276 to 1339 (SDST…NNNN). Residues 1315–1344 (NNNNNNNNNNNNNINNNNNNANNNNSDTDD) adopt a coiled-coil conformation.

It belongs to the G-protein coupled receptor 3 family. GABA-B receptor subfamily.

The protein localises to the membrane. The sequence is that of Metabotropic glutamate receptor-like protein P (grlP) from Dictyostelium discoideum (Social amoeba).